The primary structure comprises 543 residues: Putative inorganic phosphate export protein YjbB (543 aa).

The next 9 helical transmembrane spans lie at 1–21 (MLTL…THIV), 48–68 (FCAG…TMLV), 76–96 (LVAL…TALM), 99–119 (ILTF…VIFF), 134–154 (GIGL…VTPI), 175–195 (ALIG…VLLT), 196–216 (ATLT…VIGA), 240–260 (LGSL…VHLL), and 274–294 (LVIY…LPFV).

It belongs to the YjbB family.

It is found in the cell inner membrane. It carries out the reaction phosphate(in) = phosphate(out). Might be involved in phosphate export. Overproduction of YjbB reduces the elevated levels of polyphosphate (polyP) in a phoU mutant that accumulates 1000-fold higher levels of polyP than the wild type, suggesting that YjbB exports excess intracellular phosphate (Pi) in the phoU mutant and thus reduces the levels of polyP. The sequence is that of Putative inorganic phosphate export protein YjbB (yjbB) from Escherichia coli (strain K12).